A 476-amino-acid polypeptide reads, in one-letter code: Aspartyl/glutamyl-tRNA(Asn/Gln) amidotransferase subunit B (476 aa).

Belongs to the GatB/GatE family. GatB subfamily. In terms of assembly, heterotrimer of A, B and C subunits.

The enzyme catalyses L-glutamyl-tRNA(Gln) + L-glutamine + ATP + H2O = L-glutaminyl-tRNA(Gln) + L-glutamate + ADP + phosphate + H(+). The catalysed reaction is L-aspartyl-tRNA(Asn) + L-glutamine + ATP + H2O = L-asparaginyl-tRNA(Asn) + L-glutamate + ADP + phosphate + 2 H(+). Its function is as follows. Allows the formation of correctly charged Asn-tRNA(Asn) or Gln-tRNA(Gln) through the transamidation of misacylated Asp-tRNA(Asn) or Glu-tRNA(Gln) in organisms which lack either or both of asparaginyl-tRNA or glutaminyl-tRNA synthetases. The reaction takes place in the presence of glutamine and ATP through an activated phospho-Asp-tRNA(Asn) or phospho-Glu-tRNA(Gln). This is Aspartyl/glutamyl-tRNA(Asn/Gln) amidotransferase subunit B from Lactobacillus helveticus (strain DPC 4571).